Consider the following 29-residue polypeptide: Varv peptide D (29 aa).

Residues 1–29 (GLPICGETCVGGSCNTPGCSCSWPVCTRN) constitute a cross-link (cyclopeptide (Gly-Asn)). 3 cysteine pairs are disulfide-bonded: cysteine 5–cysteine 19, cysteine 9–cysteine 21, and cysteine 14–cysteine 26.

This is a cyclic peptide.

Functionally, probably participates in a plant defense mechanism. The protein is Varv peptide D of Viola arvensis (European field pansy).